A 121-amino-acid polypeptide reads, in one-letter code: Large ribosomal subunit protein uL18 (121 aa).

This sequence belongs to the universal ribosomal protein uL18 family. In terms of assembly, part of the 50S ribosomal subunit; part of the 5S rRNA/L5/L18/L25 subcomplex. Contacts the 5S and 23S rRNAs.

Its function is as follows. This is one of the proteins that bind and probably mediate the attachment of the 5S RNA into the large ribosomal subunit, where it forms part of the central protuberance. The polypeptide is Large ribosomal subunit protein uL18 (Paraburkholderia phymatum (strain DSM 17167 / CIP 108236 / LMG 21445 / STM815) (Burkholderia phymatum)).